A 76-amino-acid polypeptide reads, in one-letter code: Sec-independent protein translocase protein TatA (76 aa).

The helical transmembrane segment at methionine 1–glycine 21 threads the bilayer. The interval methionine 43 to alanine 76 is disordered. Over residues asparagine 64–alanine 76 the composition is skewed to basic and acidic residues.

Belongs to the TatA/E family. The Tat system comprises two distinct complexes: a TatABC complex, containing multiple copies of TatA, TatB and TatC subunits, and a separate TatA complex, containing only TatA subunits. Substrates initially bind to the TatABC complex, which probably triggers association of the separate TatA complex to form the active translocon.

It is found in the cell inner membrane. Its function is as follows. Part of the twin-arginine translocation (Tat) system that transports large folded proteins containing a characteristic twin-arginine motif in their signal peptide across membranes. TatA could form the protein-conducting channel of the Tat system. This Burkholderia lata (strain ATCC 17760 / DSM 23089 / LMG 22485 / NCIMB 9086 / R18194 / 383) protein is Sec-independent protein translocase protein TatA.